The sequence spans 380 residues: Cytochrome b (380 aa).

4 helical membrane-spanning segments follow: residues 34-54, 78-99, 114-134, and 179-199; these read FGSLLTICLLTQILTGLLLAM, WLIRNLHANGASFFFICIYLHI, WNTGVILLLTLMATAFVGYVL, and FFALHFLLPFMIVGLSMIHLT. Heme b is bound by residues His84 and His98. 2 residues coordinate heme b: His183 and His197. His202 is a binding site for a ubiquinone. 4 helical membrane-spanning segments follow: residues 227-247, 289-309, 321-341, and 348-368; these read LKDILGFILMLLPLTTLALFS, LGGVLALAASVLILFLAPFLH, ISQLLFWILVANLLILTWVGS, and FIIIGQLASITYFTILLILFP.

The protein belongs to the cytochrome b family. The cytochrome bc1 complex contains 11 subunits: 3 respiratory subunits (MT-CYB, CYC1 and UQCRFS1), 2 core proteins (UQCRC1 and UQCRC2) and 6 low-molecular weight proteins (UQCRH/QCR6, UQCRB/QCR7, UQCRQ/QCR8, UQCR10/QCR9, UQCR11/QCR10 and a cleavage product of UQCRFS1). This cytochrome bc1 complex then forms a dimer. Heme b serves as cofactor.

Its subcellular location is the mitochondrion inner membrane. Component of the ubiquinol-cytochrome c reductase complex (complex III or cytochrome b-c1 complex) that is part of the mitochondrial respiratory chain. The b-c1 complex mediates electron transfer from ubiquinol to cytochrome c. Contributes to the generation of a proton gradient across the mitochondrial membrane that is then used for ATP synthesis. In Pelecanoides garnotii (Peruvian diving petrel), this protein is Cytochrome b (MT-CYB).